A 395-amino-acid chain; its full sequence is Flap endonuclease 1 (395 aa).

Residues M1 to A108 form an N-domain region. D34 is a binding site for Mg(2+). R74 contacts DNA. 5 residues coordinate Mg(2+): D90, E162, E164, D183, and D185. Residues M126–Y257 form an I-domain region. E162 contacts DNA. Residues G235 and D237 each coordinate DNA. Position 237 (D237) interacts with Mg(2+). The interaction with PCNA stretch occupies residues T340–F348.

Belongs to the XPG/RAD2 endonuclease family. FEN1 subfamily. As to quaternary structure, interacts with PCNA. Three molecules of FEN1 bind to one PCNA trimer with each molecule binding to one PCNA monomer. PCNA stimulates the nuclease activity without altering cleavage specificity. Requires Mg(2+) as cofactor. Post-translationally, phosphorylated. Phosphorylation upon DNA damage induces relocalization to the nuclear plasma.

It localises to the nucleus. The protein localises to the nucleolus. It is found in the nucleoplasm. Its subcellular location is the mitochondrion. Its function is as follows. Structure-specific nuclease with 5'-flap endonuclease and 5'-3' exonuclease activities involved in DNA replication and repair. During DNA replication, cleaves the 5'-overhanging flap structure that is generated by displacement synthesis when DNA polymerase encounters the 5'-end of a downstream Okazaki fragment. It enters the flap from the 5'-end and then tracks to cleave the flap base, leaving a nick for ligation. Also involved in the long patch base excision repair (LP-BER) pathway, by cleaving within the apurinic/apyrimidinic (AP) site-terminated flap. Acts as a genome stabilization factor that prevents flaps from equilibrating into structures that lead to duplications and deletions. Also possesses 5'-3' exonuclease activity on nicked or gapped double-stranded DNA, and exhibits RNase H activity. Also involved in replication and repair of rDNA and in repairing mitochondrial DNA. In Leishmania infantum, this protein is Flap endonuclease 1.